A 908-amino-acid chain; its full sequence is Auxin response factor 6 (908 aa).

A disordered region spans residues 1-21; it reads MKLSPSAGGVSDQPPSPPEVA. The TF-B3 DNA-binding region spans 134–236; that stretch reads FCKTLTASDT…QLLLGIRRAN (103 aa). A disordered region spans residues 525 to 556; that stretch reads NEQKPQLQPQQQQQESHQQQPQHQQMQQQKHL. The span at 526–556 shows a compositional bias: low complexity; the sequence is EQKPQLQPQQQQQESHQQQPQHQQMQQQKHL. Residues 777–861 form the PB1 domain; the sequence is ATFVKVYKSG…SCIKILSPQE (85 aa).

It belongs to the ARF family. As to quaternary structure, homodimers and heterodimers.

It localises to the nucleus. Functionally, auxin response factors (ARFs) are transcriptional factors that bind specifically to the DNA sequence 5'-TGTCTC-3' found in the auxin-responsive promoter elements (AuxREs). In Oryza sativa subsp. indica (Rice), this protein is Auxin response factor 6 (ARF6).